The sequence spans 97 residues: Large ribosomal subunit protein bL31B (97 aa).

It belongs to the bacterial ribosomal protein bL31 family. Type B subfamily. Part of the 50S ribosomal subunit.

The chain is Large ribosomal subunit protein bL31B (rpmE2) from Mycolicibacterium paratuberculosis (strain ATCC BAA-968 / K-10) (Mycobacterium paratuberculosis).